The following is a 511-amino-acid chain: MVLNFLSPSLSRLGLWASVVILMVIVLKLFSLLLRRQKLARAMDSFPGPPTHWLFGHALEIQKLGSLDKVVSWAQQFPHAHPLWFGQFVGFLNIYEPDYAKAVYSRGDPKAADVYDFFLQWIGKGLLVLDGPKWFQHRKLLTPGFHYDVLKPYVAIFAESTRMMLDKWEKKASENKSFDIFCDVGHMALDTLMKCTFGKGDSGLGHRDNSYYLAVSDLTLLMQQRIDSFQYHNDFIYWLTPHGRRFLRACKIAHDHTDEVIRQRKAALQDEKERKKIQQRRHLDFLDILLGVRDESGIKLSDAELRAEVDTFMFEGHDTTTSGISWFLYCMALYPEHQQLCREEVRGILGDQDSFQWDDLAKMTYLTMCMKECFRLYPPVPQVYRQLNKPVTFVDGRSLPAGSLISLHIYALHRNSTVWPDPEVFDPLRFSPENAAGRHPFAFMPFSAGPRNCIGQQFAMNEMKVVTALCLLRFEFSLDPSKMPIKVPQLILRSKNGIHLYLKPLASRSGK.

2 residues coordinate heme: glutamate 315 and cysteine 453.

It belongs to the cytochrome P450 family. It depends on heme as a cofactor.

The protein localises to the endoplasmic reticulum membrane. Its subcellular location is the microsome membrane. The enzyme catalyses an organic molecule + reduced [NADPH--hemoprotein reductase] + O2 = an alcohol + oxidized [NADPH--hemoprotein reductase] + H2O + H(+). Functionally, cytochromes P450 are a group of heme-thiolate monooxygenases. In liver microsomes, this enzyme is involved in an NADPH-dependent electron transport pathway. It oxidizes a variety of structurally unrelated compounds, including steroids, fatty acids, and xenobiotics. This chain is Cytochrome P450 4B1 (Cyp4b1), found in Rattus norvegicus (Rat).